Reading from the N-terminus, the 309-residue chain is Glutaminase (309 aa).

Substrate contacts are provided by serine 65, asparagine 117, glutamate 162, asparagine 169, tyrosine 193, tyrosine 245, and valine 263.

Belongs to the glutaminase family. In terms of assembly, homotetramer.

The enzyme catalyses L-glutamine + H2O = L-glutamate + NH4(+). This is Glutaminase from Shouchella clausii (strain KSM-K16) (Alkalihalobacillus clausii).